Here is a 333-residue protein sequence, read N- to C-terminus: Pro-cathepsin H (333 aa).

A signal peptide spans methionine 1–threonine 20. A propeptide spans alanine 21–serine 95 (activation peptide). Asparagine 70 and asparagine 99 each carry an N-linked (GlcNAc...) asparagine glycan. Intrachain disulfides connect cysteine 100–cysteine 325, cysteine 136–cysteine 179, cysteine 170–cysteine 212, and cysteine 270–cysteine 320. Positions lysine 104–proline 113 are excised as a propeptide. Cysteine 139 is an active-site residue. N-linked (GlcNAc...) asparagine glycosylation occurs at asparagine 228. Catalysis depends on residues histidine 279 and asparagine 299.

It belongs to the peptidase C1 family. As to quaternary structure, composed of a mini chain and a large chain. The large chain may be split into heavy and light chain. All chains are held together by disulfide bonds. As to expression, widely expressed with highest expression found in non-skeletal tissues. Low levels found in skeletal tissue.

It is found in the lysosome. It carries out the reaction Hydrolysis of proteins, acting as an aminopeptidase (notably, cleaving Arg-|-Xaa bonds) as well as an endopeptidase.. Its function is as follows. Important for the overall degradation of proteins in lysosomes. In Mus musculus (Mouse), this protein is Pro-cathepsin H (Ctsh).